The primary structure comprises 71 residues: MKKGIHPEMKLVTVKCACGAEHTFYTTVDNIRIDVCSNCHPFYTSGGKGGVLIVDTEGRVEKFRRKYGDNY.

Residues cysteine 16, cysteine 18, cysteine 36, and cysteine 39 each contribute to the Zn(2+) site.

It belongs to the bacterial ribosomal protein bL31 family. Type A subfamily. In terms of assembly, part of the 50S ribosomal subunit. It depends on Zn(2+) as a cofactor.

Binds the 23S rRNA. The polypeptide is Large ribosomal subunit protein bL31 (Thermotoga maritima (strain ATCC 43589 / DSM 3109 / JCM 10099 / NBRC 100826 / MSB8)).